A 345-amino-acid chain; its full sequence is uncharacterized protein (345 aa).

Residue M1 is a domain, TBDR plug. A TBDR beta-barrel domain is found at 1 to 345; it reads MDLGPIYNTR…EVILNTKIEF (345 aa). The TonB C-terminal box signature appears at 328–345; the sequence is PVALGYAREVILNTKIEF.

The protein belongs to the TonB-dependent receptor family.

It is found in the cell outer membrane. This is an uncharacterized protein from Haemophilus influenzae (strain ATCC 51907 / DSM 11121 / KW20 / Rd).